The chain runs to 617 residues: Elongation factor 4 (617 aa).

The 187-residue stretch at 17–203 folds into the tr-type G domain; sequence ERIRNFCIIA…RVCELVPHPV (187 aa). GTP-binding positions include 29 to 34 and 150 to 153; these read DHGKST and NKID.

This sequence belongs to the TRAFAC class translation factor GTPase superfamily. Classic translation factor GTPase family. LepA subfamily.

Its subcellular location is the cell membrane. It catalyses the reaction GTP + H2O = GDP + phosphate + H(+). Required for accurate and efficient protein synthesis under certain stress conditions. May act as a fidelity factor of the translation reaction, by catalyzing a one-codon backward translocation of tRNAs on improperly translocated ribosomes. Back-translocation proceeds from a post-translocation (POST) complex to a pre-translocation (PRE) complex, thus giving elongation factor G a second chance to translocate the tRNAs correctly. Binds to ribosomes in a GTP-dependent manner. This is Elongation factor 4 from Corynebacterium urealyticum (strain ATCC 43042 / DSM 7109).